Consider the following 255-residue polypeptide: tRNA pseudouridine synthase A (255 aa).

The Nucleophile role is filled by aspartate 52. Residue tyrosine 111 participates in substrate binding.

Belongs to the tRNA pseudouridine synthase TruA family. In terms of assembly, homodimer.

It catalyses the reaction uridine(38/39/40) in tRNA = pseudouridine(38/39/40) in tRNA. Functionally, formation of pseudouridine at positions 38, 39 and 40 in the anticodon stem and loop of transfer RNAs. The protein is tRNA pseudouridine synthase A of Nitrobacter winogradskyi (strain ATCC 25391 / DSM 10237 / CIP 104748 / NCIMB 11846 / Nb-255).